Reading from the N-terminus, the 317-residue chain is MAVKATKAEKKIVYDSKLCQLLNEYSQILVVAADNVGSTQLQNIRKGLRGDSVVLMGKNTMMKRSVRIHADKTGNQAFLSLLPLLQGNVGLIFTKGDLKEVSEEVAKYKVGAPARVGLVAPIDVVVQPGNTGLDPSQTSFFQVLNIPTKINKGTVEIITPVELIKKGDKVGSSEAALLAKLGIRPFSYGLVVESVYDNGSVFNPEVLNLTEDDLVEKFAAGVSMITALSLAISYPTVAAAPHMFLNAYKNVLAVALATEYSFPQAENVKEFLKDPTKFAVAVAAPVSGESGGAVVAVAVEEEAAEESDGDMGFDLFG.

The protein belongs to the universal ribosomal protein uL10 family. In terms of assembly, P0 forms a pentameric complex by interaction with dimers of P1 and P2. Post-translationally, phosphorylated.

In terms of biological role, ribosomal protein P0 is the functional equivalent of E.coli protein L10. The chain is Large ribosomal subunit protein uL10z (RPP0A) from Arabidopsis thaliana (Mouse-ear cress).